Consider the following 653-residue polypeptide: Amyloid beta A4 precursor protein-binding family B member 1-interacting protein (653 aa).

A disordered region spans residues asparagine 82–glutamate 141. Residues leucine 116–leucine 134 are compositionally biased toward pro residues. The Ras-associating domain occupies lysine 165–tyrosine 253. Residues valine 295–tyrosine 404 enclose the PH domain. Residues lysine 462–threonine 481 show a composition bias toward basic and acidic residues. Residues lysine 462–threonine 653 are disordered. Pro residues predominate over residues proline 585–proline 604. Residues valine 605–lysine 614 are compositionally biased toward basic residues.

The protein belongs to the MRL family.

Its subcellular location is the cell membrane. The protein localises to the cytoplasm. The protein resides in the cytoskeleton. Functionally, appears to function in the signal transduction from Ras activation to actin cytoskeletal remodeling. The chain is Amyloid beta A4 precursor protein-binding family B member 1-interacting protein (apbb1ip) from Xenopus laevis (African clawed frog).